A 230-amino-acid polypeptide reads, in one-letter code: Large ribosomal subunit protein uL1c (230 aa).

It belongs to the universal ribosomal protein uL1 family. In terms of assembly, part of the 50S ribosomal subunit.

It is found in the plastid. Its subcellular location is the chloroplast. Functionally, binds directly to 23S rRNA. Might be involved in E site tRNA release (Potential). The protein is Large ribosomal subunit protein uL1c (rpl1) of Trieres chinensis (Marine centric diatom).